A 234-amino-acid chain; its full sequence is Large ribosomal subunit protein uL1 (234 aa).

Belongs to the universal ribosomal protein uL1 family. Part of the 50S ribosomal subunit.

Binds directly to 23S rRNA. The L1 stalk is quite mobile in the ribosome, and is involved in E site tRNA release. In terms of biological role, protein L1 is also a translational repressor protein, it controls the translation of the L11 operon by binding to its mRNA. The polypeptide is Large ribosomal subunit protein uL1 (Anaeromyxobacter dehalogenans (strain 2CP-1 / ATCC BAA-258)).